The chain runs to 506 residues: 2-isopropylmalate synthase (506 aa).

In terms of domain architecture, Pyruvate carboxyltransferase spans Ile-4–Lys-266. Mn(2+) is bound by residues Asp-13, His-201, His-203, and Asn-237. The segment at Asn-390–Lys-506 is regulatory domain.

It belongs to the alpha-IPM synthase/homocitrate synthase family. LeuA type 1 subfamily. Homodimer. The cofactor is Mn(2+).

The protein localises to the cytoplasm. It carries out the reaction 3-methyl-2-oxobutanoate + acetyl-CoA + H2O = (2S)-2-isopropylmalate + CoA + H(+). The protein operates within amino-acid biosynthesis; L-leucine biosynthesis; L-leucine from 3-methyl-2-oxobutanoate: step 1/4. Functionally, catalyzes the condensation of the acetyl group of acetyl-CoA with 3-methyl-2-oxobutanoate (2-ketoisovalerate) to form 3-carboxy-3-hydroxy-4-methylpentanoate (2-isopropylmalate). This Bacillus thuringiensis subsp. konkukian (strain 97-27) protein is 2-isopropylmalate synthase.